Here is a 151-residue protein sequence, read N- to C-terminus: Cytochrome c-type biogenesis protein CcmE (151 aa).

Over 1 to 8 (MNPLRKKR) the chain is Cytoplasmic. The chain crosses the membrane as a helical; Signal-anchor for type II membrane protein span at residues 9-29 (LLIILAILVGVGIAVGLALSA). Topologically, residues 30 to 151 (LKENINLFYT…QSAPTPAKEG (122 aa)) are periplasmic. The heme site is built by H124 and Y128. The interval 131–151 (PEVTKALKDSGQSAPTPAKEG) is disordered.

The protein belongs to the CcmE/CycJ family.

It localises to the cell inner membrane. Functionally, heme chaperone required for the biogenesis of c-type cytochromes. Transiently binds heme delivered by CcmC and transfers the heme to apo-cytochromes in a process facilitated by CcmF and CcmH. The polypeptide is Cytochrome c-type biogenesis protein CcmE (Pseudomonas fluorescens (strain ATCC BAA-477 / NRRL B-23932 / Pf-5)).